The chain runs to 652 residues: DNA ligase (652 aa).

NAD(+)-binding positions include 29–33 (DAEYD), 78–79 (SL), and glutamate 107. The active-site N6-AMP-lysine intermediate is the lysine 109. NAD(+) contacts are provided by arginine 130, glutamate 164, lysine 278, and lysine 302. The Zn(2+) site is built by cysteine 395, cysteine 398, cysteine 413, and cysteine 418. Residues 577 to 652 (TDDAILSGKT…VKDEAWLLDL (76 aa)) form the BRCT domain.

This sequence belongs to the NAD-dependent DNA ligase family. LigA subfamily. Mg(2+) is required as a cofactor. Requires Mn(2+) as cofactor.

It carries out the reaction NAD(+) + (deoxyribonucleotide)n-3'-hydroxyl + 5'-phospho-(deoxyribonucleotide)m = (deoxyribonucleotide)n+m + AMP + beta-nicotinamide D-nucleotide.. In terms of biological role, DNA ligase that catalyzes the formation of phosphodiester linkages between 5'-phosphoryl and 3'-hydroxyl groups in double-stranded DNA using NAD as a coenzyme and as the energy source for the reaction. It is essential for DNA replication and repair of damaged DNA. This Streptococcus thermophilus (strain ATCC BAA-491 / LMD-9) protein is DNA ligase.